A 174-amino-acid polypeptide reads, in one-letter code: NADH-quinone oxidoreductase subunit B 2 (174 aa).

[4Fe-4S] cluster is bound by residues Cys-53, Cys-54, Cys-118, and Cys-148.

It belongs to the complex I 20 kDa subunit family. NDH-1 is composed of 14 different subunits. Subunits NuoB, C, D, E, F, and G constitute the peripheral sector of the complex. [4Fe-4S] cluster is required as a cofactor.

Its subcellular location is the cell inner membrane. It carries out the reaction a quinone + NADH + 5 H(+)(in) = a quinol + NAD(+) + 4 H(+)(out). In terms of biological role, NDH-1 shuttles electrons from NADH, via FMN and iron-sulfur (Fe-S) centers, to quinones in the respiratory chain. Couples the redox reaction to proton translocation (for every two electrons transferred, four hydrogen ions are translocated across the cytoplasmic membrane), and thus conserves the redox energy in a proton gradient. The sequence is that of NADH-quinone oxidoreductase subunit B 2 from Cereibacter sphaeroides (strain ATCC 17025 / ATH 2.4.3) (Rhodobacter sphaeroides).